Here is an 84-residue protein sequence, read N- to C-terminus: Tetrahydromethanopterin S-methyltransferase subunit G (84 aa).

A helical membrane pass occupies residues 50–70 (IGILYGLVIGIILSYILPALI).

The protein belongs to the MtrG family. In terms of assembly, the complex is composed of 8 subunits; MtrA, MtrB, MtrC, MtrD, MtrE, MtrF, MtrG and MtrH.

Its subcellular location is the cell membrane. It carries out the reaction 5-methyl-5,6,7,8-tetrahydromethanopterin + coenzyme M + 2 Na(+)(in) = 5,6,7,8-tetrahydromethanopterin + methyl-coenzyme M + 2 Na(+)(out). It functions in the pathway one-carbon metabolism; methanogenesis from CO(2); methyl-coenzyme M from 5,10-methylene-5,6,7,8-tetrahydromethanopterin: step 2/2. Functionally, part of a complex that catalyzes the formation of methyl-coenzyme M and tetrahydromethanopterin from coenzyme M and methyl-tetrahydromethanopterin. This is an energy-conserving, sodium-ion translocating step. In Methanocaldococcus jannaschii (strain ATCC 43067 / DSM 2661 / JAL-1 / JCM 10045 / NBRC 100440) (Methanococcus jannaschii), this protein is Tetrahydromethanopterin S-methyltransferase subunit G.